The following is a 1000-amino-acid chain: ATP-dependent DNA/RNA helicase DHX36 (1000 aa).

The segment at 1-43 is required for recruitment to cytoplasmic stress granules; sequence MSYDYHQSWSRDGGPRGSGQGSGGGGGGSRGSGGGGGGRGGRG. Positions 1–53 are disordered; sequence MSYDYHQSWSRDGGPRGSGQGSGGGGGGSRGSGGGGGGRGGRGRHPAHLKGRE. Positions 1-96 are required for the pre-miR-134 transport; that stretch reads MSYDYHQSWS…IVQLLNSVQA (96 aa). The tract at residues 1–192 is necessary for nuclear and nucleolar caps localizations; it reads MSYDYHQSWS…KKTDPRYIEM (192 aa). Residues 15–40 show a composition bias toward gly residues; it reads PRGSGQGSGGGGGGSRGSGGGGGGRG. The segment at 45–67 is DSM (DHX36-specific motif); the sequence is HPAHLKGREIGLWYAKKQTQKNK. A required for G4-DNA- and G4-RNA-binding region spans residues 45 to 97; it reads HPAHLKGREIGLWYAKKQTQKNKEAERQERAVVHMDERREEQIVQLLNSVQAK. 2 recA-like domain regions span residues 98 to 378 and 379 to 620; these read NDKD…MIHI and PGFT…DYQL. A Phosphoserine modification is found at S153. One can recognise a Helicase ATP-binding domain in the interval 209–379; it reads VNLINNHQVT…FGNCPMIHIP (171 aa). An ATP-binding site is contributed by 225 to 230; sequence GCGKTT. Positions 257–309 are necessary for interaction with single-stranded DNA at the 3'-end of the G4-DNA structure; sequence RRISAISVAERVAAERAESCGNGNSTGYQIRLQSRLPRKQGSILYCTTGIILQ. The DEAH box signature appears at 326–329; the sequence is DEIH. Mg(2+)-binding residues include E327 and H329. In terms of domain architecture, Helicase C-terminal spans 469–639; it reads ALIRYIVLEE…ELCLQIKILR (171 aa). The interval 490–549 is necessary for interaction with single-stranded DNA at the 3'-end of the G4-DNA structure; it reads WDNISTLHDLLMSQVMFKSDRFLIIPLHSLMPTVNQTQVFKKTPPGVRKIVIATNIAETS. The Nuclear localization signal signature appears at 509–520; that stretch reads DRFLIIPLHSLM. Residues S549 and 594 to 597 each bind ATP; that span reads RAGR. The interval 621–690 is WH domain; sequence PEILRTPLEE…LGVHLARLPV (70 aa). Necessary for interaction with single-stranded DNA at the 3'-end of the G4-DNA structure stretches follow at residues 630–689, 841–852, and 862–892; these read ELCL…ARLP, NLGKKRKMVKVH, and HPKS…IYLY. The OB-fold-like subdomains stretch occupies residues 833 to 897; the sequence is PKVAKIRLNL…SIYLYDCTEV (65 aa). Residue K939 is modified to N6-acetyllysine.

As to quaternary structure, found in a multi-helicase-TICAM1 complex at least composed of DHX36, DDX1, DDX21 and TICAM1; this complex exists in resting cells with or without dsRNA poly(I:C) ligand stimulation. Interacts (via C-terminus) with TICAM1 (via TIR domain). Interacts (via C-terminus) with DDX21; this interaction serves as bridges to TICAM1. Interacts with TERT; this interaction is dependent on the ability of DHX36 to bind to the G-quadruplex RNA (G4-RNA) structure present in the telomerase RNA template component (TERC). Interacts with DKC1; this interaction is dependent on the ability of DHX36 to bind to the G4-RNA structure present in TERC. Interacts with PARN; this interaction stimulates PARN to enhance uPA mRNA decay. Interacts with EXOSC3; this interaction occurs in a RNase-insensitive manner. Interacts with EXOSC10; this interaction occurs in a RNase-insensitive manner. Interacts with ILF3; this interaction occurs in a RNA-dependent manner. Interacts with ELAVL1; this interaction occurs in an RNA-dependent manner. Interacts with DDX5; this interaction occurs in a RNA-dependent manner. Interacts with DDX17; this interaction occurs in a RNA-dependent manner. Interacts with HDAC1; this interaction occurs in a RNA-dependent manner. Interacts with HDAC3; this interaction occurs in a RNA-dependent manner. Interacts with HDAC4. Interacts with AGO1. Interacts with AGO2. Interacts with ERCC6. Mg(2+) serves as cofactor.

It is found in the nucleus. The protein localises to the cytoplasm. Its subcellular location is the cytosol. It localises to the stress granule. The protein resides in the nucleus speckle. It is found in the chromosome. The protein localises to the telomere. Its subcellular location is the mitochondrion. It localises to the perikaryon. The protein resides in the cell projection. It is found in the dendrite. The protein localises to the axon. The enzyme catalyses ATP + H2O = ADP + phosphate + H(+). With respect to regulation, ATPase activity is enhanced in the presence of homomeric poly(U) RNAs, but not by double-stranded DNA (dsDNA), double-stranded RNA (dsRNA) and tRNA. Its function is as follows. Multifunctional ATP-dependent helicase that unwinds G-quadruplex (G4) structures. Plays a role in many biological processes such as genomic integrity, gene expression regulations and as a sensor to initiate antiviral responses. G4 structures correspond to helical structures containing guanine tetrads. Binds with high affinity to and unwinds G4 structures that are formed in nucleic acids (G4-DNA and G4-RNA). Plays a role in genomic integrity. Converts the G4-RNA structure present in telomerase RNA template component (TREC) into a double-stranded RNA to promote P1 helix formation that acts as a template boundary ensuring accurate reverse transcription. Plays a role in transcriptional regulation. Resolves G4-DNA structures in promoters of genes, such as YY1, KIT/c-kit and ALPL and positively regulates their expression. Plays a role in post-transcriptional regulation. Unwinds a G4-RNA structure located in the 3'-UTR polyadenylation site of the pre-mRNA TP53 and stimulates TP53 pre-mRNA 3'-end processing in response to ultraviolet (UV)-induced DNA damage. Binds to the precursor-microRNA-134 (pre-miR-134) terminal loop and regulates its transport into the synapto-dendritic compartment. Involved in the pre-miR-134-dependent inhibition of target gene expression and the control of dendritic spine size. Plays a role in the regulation of cytoplasmic mRNA translation and mRNA stability. Binds to both G4-RNA structures and alternative non-quadruplex-forming sequence within the 3'-UTR of the PITX1 mRNA regulating negatively PITX1 protein expression. Binds to both G4-RNA structure in the 5'-UTR and AU-rich elements (AREs) localized in the 3'-UTR of NKX2-5 mRNA to either stimulate protein translation or induce mRNA decay in an ELAVL1-dependent manner, respectively. Also binds to ARE sequences present in several mRNAs mediating exosome-mediated 3'-5' mRNA degradation. Involved in cytoplasmic urokinase-type plasminogen activator (uPA) mRNA decay. Component of a multi-helicase-TICAM1 complex that acts as a cytoplasmic sensor of viral double-stranded RNA (dsRNA) and plays a role in the activation of a cascade of antiviral responses including the induction of pro-inflammatory cytokines via the adapter molecule TICAM1. Required for the early embryonic development and hematopoiesis. Involved in the regulation of cardioblast differentiation and proliferation during heart development. Involved in spermatogonia differentiation. May play a role in ossification. In Rattus norvegicus (Rat), this protein is ATP-dependent DNA/RNA helicase DHX36.